The primary structure comprises 120 residues: NAD(P)H-quinone oxidoreductase subunit 3 (120 aa).

3 helical membrane-spanning segments follow: residues 11-31, 64-84, and 89-109; these read LIFLLLSALVPVLALTISYLI, MFALVFVVFDVETVFLYPWAV, and LGLLAFIEALIFIAILVVALV.

The protein belongs to the complex I subunit 3 family. As to quaternary structure, NDH-1 can be composed of about 15 different subunits; different subcomplexes with different compositions have been identified which probably have different functions.

It is found in the cell inner membrane. It catalyses the reaction a plastoquinone + NADH + (n+1) H(+)(in) = a plastoquinol + NAD(+) + n H(+)(out). The catalysed reaction is a plastoquinone + NADPH + (n+1) H(+)(in) = a plastoquinol + NADP(+) + n H(+)(out). In terms of biological role, NDH-1 shuttles electrons from an unknown electron donor, via FMN and iron-sulfur (Fe-S) centers, to quinones in the respiratory and/or the photosynthetic chain. The immediate electron acceptor for the enzyme in this species is believed to be plastoquinone. Couples the redox reaction to proton translocation, and thus conserves the redox energy in a proton gradient. Cyanobacterial NDH-1 also plays a role in inorganic carbon-concentration. This is NAD(P)H-quinone oxidoreductase subunit 3 from Gloeobacter violaceus (strain ATCC 29082 / PCC 7421).